The chain runs to 435 residues: DEAD-box ATP-dependent RNA helicase CshB (435 aa).

Residues 5-33 (SRFDQFGFQPFIGLAIDKLGFYEPTEVQQ) carry the Q motif motif. One can recognise a Helicase ATP-binding domain in the interval 36–208 (IPGILKGESI…SKYMENPRYE (173 aa)). 49–56 (SQTGTGKT) is a binding site for ATP. The DEAD box motif lies at 156 to 159 (DEAD). Residues 235–378 (LLKNVLVGSQ…HVDWKNKEFV (144 aa)) enclose the Helicase C-terminal domain. Positions 383–435 (RNRRAKREAKRETADPREIGMRKKAKQKGKPNYKKKINYKMNEIKRRERRKKR) are disordered. A compositionally biased stretch (basic and acidic residues) spans 391 to 403 (AKRETADPREIGM). Residues 404 to 420 (RKKAKQKGKPNYKKKIN) show a composition bias toward basic residues.

It belongs to the DEAD box helicase family. CshB subfamily.

It is found in the cytoplasm. It catalyses the reaction ATP + H2O = ADP + phosphate + H(+). DEAD-box RNA helicase involved in cold tolerance, motility, and tolerance to heat, alkali and oxidative stress. The chain is DEAD-box ATP-dependent RNA helicase CshB from Listeria monocytogenes serovar 1/2a (strain ATCC BAA-679 / EGD-e).